Consider the following 99-residue polypeptide: MALTKADMSERLFEELGLNKREAKELVEMFFEEVRMALERGEQVKLSGFGNFTLRDKNQRPGRNPKTGEEIPISARRVVTFRPGQKLKARVEAYVGSGE.

This sequence belongs to the bacterial histone-like protein family. As to quaternary structure, heterodimer of an alpha and a beta chain.

Its function is as follows. This protein is one of the two subunits of integration host factor, a specific DNA-binding protein that functions in genetic recombination as well as in transcriptional and translational control. The sequence is that of Integration host factor subunit alpha from Thioalkalivibrio sulfidiphilus (strain HL-EbGR7).